Reading from the N-terminus, the 427-residue chain is Imidazolonepropionase (427 aa).

2 residues coordinate Fe(3+): H78 and H80. Residues H78 and H80 each contribute to the Zn(2+) site. Residues R87, Y150, and H183 each coordinate 4-imidazolone-5-propanoate. Y150 contributes to the N-formimidoyl-L-glutamate binding site. H255 provides a ligand contact to Fe(3+). Residue H255 participates in Zn(2+) binding. 4-imidazolone-5-propanoate is bound at residue E258. D330 is a Fe(3+) binding site. D330 is a binding site for Zn(2+). Positions 332 and 334 each coordinate N-formimidoyl-L-glutamate. T335 provides a ligand contact to 4-imidazolone-5-propanoate.

This sequence belongs to the metallo-dependent hydrolases superfamily. HutI family. It depends on Zn(2+) as a cofactor. The cofactor is Fe(3+).

Its subcellular location is the cytoplasm. It carries out the reaction 4-imidazolone-5-propanoate + H2O = N-formimidoyl-L-glutamate. It functions in the pathway amino-acid degradation; L-histidine degradation into L-glutamate; N-formimidoyl-L-glutamate from L-histidine: step 3/3. Its function is as follows. Catalyzes the hydrolytic cleavage of the carbon-nitrogen bond in imidazolone-5-propanoate to yield N-formimidoyl-L-glutamate. It is the third step in the universal histidine degradation pathway. The chain is Imidazolonepropionase from Herpetosiphon aurantiacus (strain ATCC 23779 / DSM 785 / 114-95).